A 246-amino-acid chain; its full sequence is Small ribosomal subunit protein uS2 (246 aa).

It belongs to the universal ribosomal protein uS2 family.

The chain is Small ribosomal subunit protein uS2 from Saccharophagus degradans (strain 2-40 / ATCC 43961 / DSM 17024).